A 126-amino-acid polypeptide reads, in one-letter code: LWamide neuropeptides (126 aa).

Residues 1–2 constitute a propeptide, 1; sequence KR. The interval 1-126 is disordered; sequence KRQQPGLWGR…KSAIPKAKPQ (126 aa). Trp-8 bears the Tryptophan amide mark. A propeptide spans 11–15 (2); that stretch reads SADPQ. Residues Trp-20 and Trp-29 each carry the tryptophan amide modification. Residues 32–36 constitute a propeptide, 2; sequence SADPQ. Residues Trp-41 and Trp-50 each carry the tryptophan amide modification. Residues 53–57 constitute a propeptide, 2; the sequence is SADPQ. Tryptophan amide is present on residues Trp-62 and Trp-71. The propeptide at 74–78 is 2; sequence SADPQ. Trp-83 is modified (tryptophan amide). Positions 86–93 are cleaved as a propeptide — 3; the sequence is SAGSGKRQ. Residue Trp-99 is modified to Tryptophan amide. Residues 102-126 constitute a propeptide, 4; the sequence is SAEPPQYKELEDLKQKSAIPKAKPQ. Basic and acidic residues predominate over residues 107-116; the sequence is QYKELEDLKQ.

This sequence belongs to the LWamide neuropeptide family.

The protein localises to the secreted. Its function is as follows. Metamorphosin A may be part of an internal signaling system involved in control of metamorphosis. In Anemonia sulcata (Mediterranean snakelocks sea anemone), this protein is LWamide neuropeptides.